The chain runs to 215 residues: Protein GET1 (215 aa).

The Lumenal segment spans residues 1–4; sequence MINL. Residues 5-24 form a helical membrane-spanning segment; sequence ALVIFLCTLLNQIVSWVGKS. Over 25-108 the chain is Cytoplasmic; sequence VLQEIAFTAY…SFSKKFSTLL (84 aa). Residues 73 to 94 adopt a coiled-coil conformation; it reads AKLRRKLDKGLADLEKTNNTLS. The helical transmembrane segment at 109–129 threads the bilayer; sequence WLMTTGAQFLLSWWFRKQPIF. Over 130-153 the chain is Lumenal; sequence WLPEGWVPYPVAWLLSFPSAPIGS. The helical transmembrane segment at 154-170 threads the bilayer; sequence VSSGAWGAICRRVLSTL. Over 171 to 215 the chain is Cytoplasmic; that stretch reads QEIIQSVLAPSPAATGPVPTGPSSAKNDQPEAKIEALALEHEKLD. The disordered stretch occupies residues 181–202; sequence SPAATGPVPTGPSSAKNDQPEA.

This sequence belongs to the WRB/GET1 family. In terms of assembly, interacts with GET3.

It localises to the endoplasmic reticulum membrane. Its function is as follows. Required for the post-translational delivery of tail-anchored (TA) proteins to the endoplasmic reticulum. Acts as a membrane receptor for soluble GET3, which recognizes and selectively binds the transmembrane domain of TA proteins in the cytosol. The protein is Protein GET1 of Cryptococcus neoformans var. neoformans serotype D (strain B-3501A) (Filobasidiella neoformans).